The chain runs to 217 residues: MTTIAIVDYGMGNLRSVAQALSTVAPDADVRISAQADEIRAADRVVLPGQGAMPDCMAAFDQSGLREAVLEAARTKPMLGVCVGEQMLLERSAEARAGEAFTAGLGLISGDVIRFDLDGRLQPDGSRYKVPQMGWNRVHQSRTHALWAGVPDQSYFYFVHSYYARPAHPDESVGETEYGVRFTCAIARDNIFATQFHPEKSAQAGLQIYRNFVHWKP.

Residues 3 to 217 (TIAIVDYGMG…IYRNFVHWKP (215 aa)) form the Glutamine amidotransferase type-1 domain. Cysteine 82 acts as the Nucleophile in catalysis. Catalysis depends on residues histidine 197 and glutamate 199.

In terms of assembly, heterodimer of HisH and HisF.

It localises to the cytoplasm. The catalysed reaction is 5-[(5-phospho-1-deoxy-D-ribulos-1-ylimino)methylamino]-1-(5-phospho-beta-D-ribosyl)imidazole-4-carboxamide + L-glutamine = D-erythro-1-(imidazol-4-yl)glycerol 3-phosphate + 5-amino-1-(5-phospho-beta-D-ribosyl)imidazole-4-carboxamide + L-glutamate + H(+). It catalyses the reaction L-glutamine + H2O = L-glutamate + NH4(+). Its pathway is amino-acid biosynthesis; L-histidine biosynthesis; L-histidine from 5-phospho-alpha-D-ribose 1-diphosphate: step 5/9. Its function is as follows. IGPS catalyzes the conversion of PRFAR and glutamine to IGP, AICAR and glutamate. The HisH subunit catalyzes the hydrolysis of glutamine to glutamate and ammonia as part of the synthesis of IGP and AICAR. The resulting ammonia molecule is channeled to the active site of HisF. This chain is Imidazole glycerol phosphate synthase subunit HisH, found in Ralstonia nicotianae (strain ATCC BAA-1114 / GMI1000) (Ralstonia solanacearum).